Reading from the N-terminus, the 313-residue chain is uncharacterized protein (313 aa).

To B.subtilis YqxC and T.hyodysenteriae hemolysin TlyA.

This is an uncharacterized protein from Bacillus subtilis (strain 168).